The following is a 188-amino-acid chain: MANSIYNLAHADALPLESGNSILFPPLYDIVWSLIPFLIILIVFWKLVLPKFQEVLTEREDRIKGGIQRAEAAQAEAKAALEKYNAQLAEARTEAAEIREQARERGKQIEAELKDKANEESNRIIESGSKQLLAQREQVVNELRREMGQNSINLAEHLLGDQLSDNVKRSGTIDRFLADLDTVAPNGK.

A helical membrane pass occupies residues 30-50 (IVWSLIPFLIILIVFWKLVLP).

It belongs to the ATPase B chain family. F-type ATPases have 2 components, F(1) - the catalytic core - and F(0) - the membrane proton channel. F(1) has five subunits: alpha(3), beta(3), gamma(1), delta(1), epsilon(1). F(0) has three main subunits: a(1), b(2) and c(10-14). The alpha and beta chains form an alternating ring which encloses part of the gamma chain. F(1) is attached to F(0) by a central stalk formed by the gamma and epsilon chains, while a peripheral stalk is formed by the delta and b chains.

It localises to the cell membrane. Functionally, f(1)F(0) ATP synthase produces ATP from ADP in the presence of a proton or sodium gradient. F-type ATPases consist of two structural domains, F(1) containing the extramembraneous catalytic core and F(0) containing the membrane proton channel, linked together by a central stalk and a peripheral stalk. During catalysis, ATP synthesis in the catalytic domain of F(1) is coupled via a rotary mechanism of the central stalk subunits to proton translocation. Component of the F(0) channel, it forms part of the peripheral stalk, linking F(1) to F(0). This is ATP synthase subunit b from Corynebacterium glutamicum (strain R).